We begin with the raw amino-acid sequence, 388 residues long: S-adenosylmethionine synthase (388 aa).

His17 is a binding site for ATP. Mg(2+) is bound at residue Asp19. K(+) is bound at residue Glu45. Glu58 and Gln106 together coordinate L-methionine. A flexible loop region spans residues 106-116 (QSAHIAQGVDK). ATP-binding positions include 166-168 (DAK), Asp241, 247-248 (RK), Ala264, and Lys268. Asp241 contacts L-methionine. Position 272 (Lys272) interacts with L-methionine.

This sequence belongs to the AdoMet synthase family. In terms of assembly, homotetramer; dimer of dimers. Mg(2+) is required as a cofactor. Requires K(+) as cofactor.

It localises to the cytoplasm. It catalyses the reaction L-methionine + ATP + H2O = S-adenosyl-L-methionine + phosphate + diphosphate. It participates in amino-acid biosynthesis; S-adenosyl-L-methionine biosynthesis; S-adenosyl-L-methionine from L-methionine: step 1/1. Catalyzes the formation of S-adenosylmethionine (AdoMet) from methionine and ATP. The overall synthetic reaction is composed of two sequential steps, AdoMet formation and the subsequent tripolyphosphate hydrolysis which occurs prior to release of AdoMet from the enzyme. The chain is S-adenosylmethionine synthase from Cereibacter sphaeroides (strain ATCC 17023 / DSM 158 / JCM 6121 / CCUG 31486 / LMG 2827 / NBRC 12203 / NCIMB 8253 / ATH 2.4.1.) (Rhodobacter sphaeroides).